The chain runs to 72 residues: Enterobactin biosynthesis protein YbdZ (72 aa).

The protein belongs to the MbtH-like family.

Its function is as follows. Involved in the biosynthesis of the siderophore enterobactin (enterochelin), which is a macrocyclic trimeric lactone of N-(2,3-dihydroxybenzoyl)-serine. Plays a role in the catalytic function of EntF. It is required for adenylation of amino acids in non-ribosomal peptide biosynthesis. The polypeptide is Enterobactin biosynthesis protein YbdZ (Escherichia coli (strain K12)).